Reading from the N-terminus, the 261-residue chain is Polycomb group RING finger protein 1 (261 aa).

The RING-type zinc-finger motif lies at 45 to 84 (CYLCAGYFIDATTITECLHTFCKSCIVKYLQTSKYCPMCN).

Component of a PRC1-like complex.

The protein resides in the nucleus. Component of a Polycomb group (PcG) multiprotein PRC1-like complex, a complex class required to maintain the transcriptionally repressive state of many genes, including Hox genes, throughout development. PcG PRC1 complex acts via chromatin remodeling and modification of histones; it mediates monoubiquitination of histone H2A 'Lys-119', rendering chromatin heritably changed in its expressibility. This chain is Polycomb group RING finger protein 1 (pcgf1), found in Danio rerio (Zebrafish).